Reading from the N-terminus, the 330-residue chain is tRNA-modifying protein YgfZ (330 aa).

W28 and W190 together coordinate folate.

It belongs to the tRNA-modifying YgfZ family.

Its subcellular location is the cytoplasm. Its function is as follows. Folate-binding protein involved in regulating the level of ATP-DnaA and in the modification of some tRNAs. It is probably a key factor in regulatory networks that act via tRNA modification, such as initiation of chromosomal replication. The chain is tRNA-modifying protein YgfZ from Yersinia pestis bv. Antiqua (strain Antiqua).